The sequence spans 164 residues: 2-C-methyl-D-erythritol 2,4-cyclodiphosphate synthase (164 aa).

A divalent metal cation contacts are provided by D8 and H10. Residues 8-10 and 34-35 each bind 4-CDP-2-C-methyl-D-erythritol 2-phosphate; these read DVH and HS. H42 contributes to the a divalent metal cation binding site. 4-CDP-2-C-methyl-D-erythritol 2-phosphate contacts are provided by residues 56-58, 132-135, F139, and K142; these read DIG and TTEE.

Belongs to the IspF family. As to quaternary structure, homotrimer. A divalent metal cation is required as a cofactor.

The catalysed reaction is 4-CDP-2-C-methyl-D-erythritol 2-phosphate = 2-C-methyl-D-erythritol 2,4-cyclic diphosphate + CMP. It participates in isoprenoid biosynthesis; isopentenyl diphosphate biosynthesis via DXP pathway; isopentenyl diphosphate from 1-deoxy-D-xylulose 5-phosphate: step 4/6. In terms of biological role, involved in the biosynthesis of isopentenyl diphosphate (IPP) and dimethylallyl diphosphate (DMAPP), two major building blocks of isoprenoid compounds. Catalyzes the conversion of 4-diphosphocytidyl-2-C-methyl-D-erythritol 2-phosphate (CDP-ME2P) to 2-C-methyl-D-erythritol 2,4-cyclodiphosphate (ME-CPP) with a corresponding release of cytidine 5-monophosphate (CMP). This Clostridium kluyveri (strain NBRC 12016) protein is 2-C-methyl-D-erythritol 2,4-cyclodiphosphate synthase.